The following is a 572-amino-acid chain: Putative acyl-CoA synthetase CCNA_01223 (572 aa).

This sequence belongs to the ATP-dependent AMP-binding enzyme family.

Its pathway is lipid metabolism; sphingolipid metabolism. Involved in de novo bacterial ceramide synthesis. The chain is Putative acyl-CoA synthetase CCNA_01223 from Caulobacter vibrioides (strain NA1000 / CB15N) (Caulobacter crescentus).